We begin with the raw amino-acid sequence, 289 residues long: Rhomboid-type serine protease 2 (289 aa).

6 helical membrane passes run 26–46, 67–87, 100–120, 122–142, 157–179, and 184–203; these read VVIIAIVGFWLAGLQSIVDIQ, FPFIHLNIFHAVMNILALTPL, CLALFFGPLTTIPAFLYIGLE, FVFGNNVAVMGASMWVFLLLG, IGTYSIPTWTTPIGVLFAMAVLV, and FWGHAAGLVIGYGGMFSSTL. Serine 134 (nucleophile) is an active-site residue. Histidine 187 is an active-site residue.

This sequence belongs to the peptidase S54 family.

The protein resides in the golgi apparatus membrane. The protein localises to the golgi apparatus. It is found in the cis-Golgi network membrane. The enzyme catalyses Cleaves type-1 transmembrane domains using a catalytic dyad composed of serine and histidine that are contributed by different transmembrane domains.. Its function is as follows. Probable rhomboid-type serine protease that catalyzes intramembrane proteolysis. This chain is Rhomboid-type serine protease 2 (RBD2), found in Podospora anserina (Pleurage anserina).